Reading from the N-terminus, the 512-residue chain is Solute carrier family 40 member 2 (512 aa).

The disordered stretch occupies residues 1 to 28; it reads MEEETETRVFLSNEQHQEEEEEEEEEPS. Over residues 17–27 the composition is skewed to acidic residues; the sequence is QEEEEEEEEEP. The next 11 helical transmembrane spans lie at 55 to 75, 105 to 125, 133 to 153, 187 to 207, 214 to 234, 310 to 330, 343 to 363, 376 to 396, 405 to 425, 442 to 462, and 468 to 488; these read VALYMIYLWPNSLFLTAMYGV, LVTQNLSFIVAGGAVVALLVV, FPVFATLVVLTNLSGAIGVLS, GIDLSSKLLSPVITGLIISFV, ITFAAWATITVWIEYWLFISV, IVLPGVSLALLFFTVLSFGTL, YIIGIGRGISAGVGLAATVLY, GVWSFWSQWTCLLVCVGSIWV, MLMAGVAASRLGLWMFDLAVI, GVQNSLQSALDLMANLLGIIV, and FWMLTLISFATVSLAGILYTI.

The protein belongs to the ferroportin (FP) (TC 2.A.100) family. SLC40A subfamily.

It localises to the vacuole membrane. Functionally, vacuolar transporter that is involved in the transport of excess nickel into the vacuole under iron deficiency, increasing cellular tolerance to nickel under iron deficiency stress response. The chain is Solute carrier family 40 member 2 (IREG2) from Arabidopsis thaliana (Mouse-ear cress).